The sequence spans 306 residues: Malate dehydrogenase (306 aa).

Residues 8–13 and Asp33 each bind NAD(+); that span reads GVGRVG. Substrate is bound by residues Arg82 and Arg88. Residues Asn95 and 118-120 each bind NAD(+); that span reads VAN. The substrate site is built by Asn120 and Arg148. Residue His172 is the Proton acceptor of the active site.

It belongs to the LDH/MDH superfamily.

The enzyme catalyses (S)-malate + NAD(+) = oxaloacetate + NADH + H(+). Catalyzes the reversible oxidation of malate to oxaloacetate. The sequence is that of Malate dehydrogenase (mdh) from Sulfolobus acidocaldarius (strain ATCC 33909 / DSM 639 / JCM 8929 / NBRC 15157 / NCIMB 11770).